The sequence spans 429 residues: tRNA(Ile2) 2-agmatinylcytidine synthetase TiaS (429 aa).

The OB DNA-binding region spans 271 to 343; sequence VRGKVIKKYW…LTLNLEKFYP (73 aa).

This sequence belongs to the TiaS family.

The protein resides in the cytoplasm. It carries out the reaction cytidine(34) in tRNA(Ile2) + agmatine + ATP + H2O = 2-agmatinylcytidine(34) in tRNA(Ile2) + AMP + 2 phosphate + 2 H(+). Its function is as follows. ATP-dependent agmatine transferase that catalyzes the formation of 2-agmatinylcytidine (agm2C) at the wobble position (C34) of tRNA(Ile2), converting the codon specificity from AUG to AUA. This chain is tRNA(Ile2) 2-agmatinylcytidine synthetase TiaS, found in Thermococcus sibiricus (strain DSM 12597 / MM 739).